The chain runs to 264 residues: 3-methyl-2-oxobutanoate hydroxymethyltransferase (264 aa).

Mg(2+)-binding residues include Asp-45 and Asp-84. 3-methyl-2-oxobutanoate-binding positions include Asp-45–Ser-46, Asp-84, and Lys-112. Residue Glu-114 coordinates Mg(2+). Glu-181 functions as the Proton acceptor in the catalytic mechanism.

This sequence belongs to the PanB family. As to quaternary structure, homodecamer; pentamer of dimers. Mg(2+) serves as cofactor.

Its subcellular location is the cytoplasm. It carries out the reaction 3-methyl-2-oxobutanoate + (6R)-5,10-methylene-5,6,7,8-tetrahydrofolate + H2O = 2-dehydropantoate + (6S)-5,6,7,8-tetrahydrofolate. It functions in the pathway cofactor biosynthesis; (R)-pantothenate biosynthesis; (R)-pantoate from 3-methyl-2-oxobutanoate: step 1/2. In terms of biological role, catalyzes the reversible reaction in which hydroxymethyl group from 5,10-methylenetetrahydrofolate is transferred onto alpha-ketoisovalerate to form ketopantoate. The protein is 3-methyl-2-oxobutanoate hydroxymethyltransferase of Escherichia coli O8 (strain IAI1).